Consider the following 486-residue polypeptide: MAWQVSVPELEDRLQCPVCLEVFKEPLMLQCGHSYCKGCLLSLSRHLDSELRCPVCRQEVDSSSSPPNVSLARVIEALQLPGDPEPQVCTHHRNPLSLFCEKDQELICGLCGLLGSHQHHRVTPVSTVYSRMKEELAALISDLKQEQKKVEEQVAKLVNNRTRIVNESDVFSWVIRREFQELHHLVDEEKARCLEGVEGHTRGLVASLDMQLEQARGAQERLAQATCMLEQFGNESHYEFIRYHSTASSAELQQARLLEGAFSPISFKPGLHQADIKLTVWKRLFRKVLPAPESLKLDPTTAHPLLELSKGNTVVQCGLLAQRRASQPERFDYSTCVLASRGFSCGRHYWEVVVGSKSDWRLGVIKGTASRKGKLNKSPEHGVWLIGLKEGRVYEAFSCPRVPLPVAGHPHRIGVYLHYEQGELTFFDADRPDDLRLLYTFQADFQGKLYPILDTCWHERGSNSLPMVLPLPSGPGHLTPSQPTKL.

Residues 16–57 form an RING-type zinc finger; it reads CPVCLEVFKEPLMLQCGHSYCKGCLLSLSRHLDSELRCPVCR. The B box-type zinc finger occupies 84 to 125; that stretch reads PEPQVCTHHRNPLSLFCEKDQELICGLCGLLGSHQHHRVTPV. Positions 89, 92, 111, and 117 each coordinate Zn(2+). 2 coiled-coil regions span residues 125–170 and 204–235; these read VSTV…ESDV and LVAS…FGNE. A B30.2/SPRY domain is found at 275 to 474; it reads DIKLTVWKRL…LPMVLPLPSG (200 aa). The residue at position 372 (Lys-372) is an N6-acetyllysine.

It belongs to the TRIM/RBCC family. In terms of assembly, can form dimers and trimers. Interacts with several E2 ubiquitin-conjugating enzymes, including UBE2L6, UBE2E1, UBE2E3. No interaction with UBE2H. Interacts with BECN1. Interacts with SQSTM1. Interacts with NLRP3. In terms of processing, auto-ubiquitinated. Post-translationally, acetylated by EP300 and KAT2B. HDAC6 drives TRIM50 deacetylation. Acetylation antagonizes with TRIM50 ubiquitination.

It is found in the cytoplasm. The enzyme catalyses S-ubiquitinyl-[E2 ubiquitin-conjugating enzyme]-L-cysteine + [acceptor protein]-L-lysine = [E2 ubiquitin-conjugating enzyme]-L-cysteine + N(6)-ubiquitinyl-[acceptor protein]-L-lysine.. In terms of biological role, E3 ubiquitin-protein ligase that ubiquitinates Beclin-1/BECN1 in a 'Lys-63'-dependent manner enhancing its binding to ULK1. In turn, promotes starvation-induced autophagy activation. Also interacts with p62/SQSTM1 protein and thereby induces the formation and the autophagy clearance of aggresome-associated polyubiquitinated proteins through HDAC6 interaction. Also promotes NLRP3 inflammasome activation by directly inducing NLRP3 oligomerization independent of its E3 ligase function. This is E3 ubiquitin-protein ligase TRIM50 (TRIM50) from Sus scrofa (Pig).